The primary structure comprises 1023 residues: Probable histidine kinase 3 (1023 aa).

Residues 1–80 (MDEMSCGGGG…RGWRVVRETW (80 aa)) are Cytoplasmic-facing. A helical membrane pass occupies residues 81 to 101 (WWVLLLWILAGSLGSFYLFLF). The Extracellular segment spans residues 102-387 (MNAQSLDKRR…CRFEKKPPWP (286 aa)). Residues 151–352 (TPSAIDQMTF…TNESPISMYG (202 aa)) form the CHASE domain. The chain crosses the membrane as a helical span at residues 388–408 (WLAITSSFGTLVIALLTGHIF). At 409-1023 (QATVHRIAKV…RFFQNHDQVE (615 aa)) the chain is on the cytoplasmic side. One can recognise a Histidine kinase domain in the interval 445–715 (TVSHEIRTPM…TFTFTAVLMR (271 aa)). H448 carries the phosphohistidine; by autocatalysis modification. 2 consecutive Response regulatory domains span residues 732–854 (NALV…RRAL) and 880–1016 (QIIV…ARFF). D783 carries the 4-aspartylphosphate modification. The interval 812–831 (LFLLGSSASSPKGGSDTSRE) is disordered. Residues 817-827 (SSASSPKGGSD) are compositionally biased toward polar residues. The residue at position 930 (D930) is a 4-aspartylphosphate.

Post-translationally, activation probably requires a transfer of a phosphate group between a His in the transmitter domain and an Asp of the receiver domain. Highly expressed in young leaves and at lower levels in roots, mature leaves, stems and spikelets.

Its subcellular location is the cell membrane. It carries out the reaction ATP + protein L-histidine = ADP + protein N-phospho-L-histidine.. Functionally, cytokinin receptor related to bacterial two-component regulators. Functions as a histidine kinase and transmits the stress signal to a downstream MAPK cascade. The chain is Probable histidine kinase 3 from Oryza sativa subsp. japonica (Rice).